The chain runs to 406 residues: 4-hydroxy-3-methylbut-2-en-1-yl diphosphate synthase (flavodoxin) (406 aa).

Positions 297, 300, 343, and 350 each coordinate [4Fe-4S] cluster.

This sequence belongs to the IspG family. In terms of assembly, homodimer. [4Fe-4S] cluster is required as a cofactor.

It catalyses the reaction (2E)-4-hydroxy-3-methylbut-2-enyl diphosphate + oxidized [flavodoxin] + H2O + 2 H(+) = 2-C-methyl-D-erythritol 2,4-cyclic diphosphate + reduced [flavodoxin]. It participates in isoprenoid biosynthesis; isopentenyl diphosphate biosynthesis via DXP pathway; isopentenyl diphosphate from 1-deoxy-D-xylulose 5-phosphate: step 5/6. Converts 2C-methyl-D-erythritol 2,4-cyclodiphosphate (ME-2,4cPP) into 1-hydroxy-2-methyl-2-(E)-butenyl 4-diphosphate. This Thermus thermophilus (strain ATCC BAA-163 / DSM 7039 / HB27) protein is 4-hydroxy-3-methylbut-2-en-1-yl diphosphate synthase (flavodoxin).